Consider the following 1085-residue polypeptide: Voltage-dependent calcium channel subunit alpha-2/delta-3 (1085 aa).

Residues 1–33 (MAGPGSLCCASRGASALLATALLYAALGDVVRS) form the signal peptide. Topologically, residues 34–1062 (EQQIPLSVVK…HPEENARECG (1029 aa)) are extracellular. Asn166 is a glycosylation site (N-linked (GlcNAc...) asparagine). Positions 256 to 438 (DVVILVDVSG…ENVMEYLHVL (183 aa)) constitute a VWFA domain. 3 residues coordinate a divalent metal cation: Asp262, Ser264, and Ser266. The short motif at 262 to 266 (DVSGS) is the MIDAS-like motif element. Asn309 carries N-linked (GlcNAc...) asparagine glycosylation. Cys412 and Cys1049 are joined by a disulfide. One can recognise a Cache domain in the interval 452–543 (WTEAYIDSTL…RPLYEEGKKR (92 aa)). Residues Asn547 and Asn626 are each glycosylated (N-linked (GlcNAc...) asparagine). Tyr918 is modified (phosphotyrosine). Residues 1063–1083 (GASSLQAQVALLLLPLVSSLF) traverse the membrane as a helical segment. Topologically, residues 1084 to 1085 (SR) are cytoplasmic.

Belongs to the calcium channel subunit alpha-2/delta family. Dimer formed of alpha-2-2 and delta-2 chains; disulfide-linked. Voltage-dependent calcium channels are multisubunit complexes, consisting of alpha-1 (CACNA1), alpha-2 (CACNA2D), beta (CACNB) and delta (CACNA2D) subunits in a 1:1:1:1 ratio. In terms of processing, N-glycosylated. Post-translationally, may be proteolytically processed into subunits alpha-2-3 and delta-3 that are disulfide-linked. It is however unclear whether such cleavage really takes place in vivo and has a functional role. As to expression, in heart, it is expressed in atrium but not in ventricle.

It is found in the membrane. Its function is as follows. The alpha-2/delta subunit of voltage-dependent calcium channels regulates calcium current density and activation/inactivation kinetics of the calcium channel. Acts as a regulatory subunit for P/Q-type calcium channel (CACNA1A), N-type (CACNA1B), L-type (CACNA1C OR CACNA1D) but not T-type (CACNA1G). In Rattus norvegicus (Rat), this protein is Voltage-dependent calcium channel subunit alpha-2/delta-3 (Cacna2d3).